Consider the following 284-residue polypeptide: Small ribosomal subunit protein uS5 (284 aa).

The span at 1-10 shows a compositional bias: basic and acidic residues; the sequence is MMADEKKTPE. The tract at residues 1 to 105 is disordered; the sequence is MMADEKKTPE…DNRRGGRREE (105 aa). Over residues 14–23 the composition is skewed to low complexity; that stretch reads ETATPAVAVE. The span at 24–43 shows a compositional bias: basic and acidic residues; sequence DALKAEPTETLEAQKAKAEA. Residues 44-67 show a composition bias toward low complexity; it reads ETPAVAETPSEAAANQSAAQGAEG. Over residues 68–105 the composition is skewed to basic and acidic residues; that stretch reads QPRERGGHDRGGRGGRGGNDRGRGRGGRDNRRGGRREE. The region spanning 110-173 is the S5 DRBM domain; it reads IIEKLVHINR…AAARKKMIRV (64 aa). Residues 246–284 form a disordered region; sequence DQTSPKSVAQRRGKKVADLLGRGGASEAEAEADAAAIAE.

It belongs to the universal ribosomal protein uS5 family. Part of the 30S ribosomal subunit. Contacts proteins S4 and S8.

Its function is as follows. With S4 and S12 plays an important role in translational accuracy. In terms of biological role, located at the back of the 30S subunit body where it stabilizes the conformation of the head with respect to the body. The protein is Small ribosomal subunit protein uS5 of Erythrobacter litoralis (strain HTCC2594).